A 1068-amino-acid polypeptide reads, in one-letter code: Phosphatidylinositol 4,5-bisphosphate 3-kinase catalytic subunit alpha isoform (1068 aa).

Positions 16–105 (MPPRILVECL…QPFLKVIEPV (90 aa)) constitute a PI3K-ABD domain. The PI3K-RBD domain occupies 187–289 (KGQIIVVIWV…GRMPNLMLMA (103 aa)). Residues 330-487 (INSALRIKIL…DWFSSVVKFP (158 aa)) form the C2 PI3K-type domain. The PIK helical domain occupies 517 to 694 (LARDNELREN…GLLLESYCRA (178 aa)). Residues 765–1051 (RLEECRIMSS…QMNDAHHGGW (287 aa)) form the PI3K/PI4K catalytic domain. A G-loop region spans residues 771 to 777 (IMSSAKR). A catalytic loop region spans residues 912–920 (GIGDRHNSN). The activation loop stretch occupies residues 931–957 (HIDFGHFLDHKKKKFGYKRERVPFVLT).

Belongs to the PI3/PI4-kinase family. Heterodimer of a catalytic subunit PIK3CA and a p85 regulatory subunit (PIK3R1, PIK3R2 or PIK3R3). Interacts with IRS1 in nuclear extracts. Interacts with RUFY3. Interacts with RASD2. Interacts with APPL1. Interacts with HRAS and KRAS. Interaction with HRAS/KRAS is required for PI3K pathway signaling and cell proliferation stimulated by EGF and FGF2. Interacts with FAM83B; activates the PI3K/AKT signaling cascade.

It carries out the reaction a 1,2-diacyl-sn-glycero-3-phospho-(1D-myo-inositol-4,5-bisphosphate) + ATP = a 1,2-diacyl-sn-glycero-3-phospho-(1D-myo-inositol-3,4,5-trisphosphate) + ADP + H(+). The enzyme catalyses a 1,2-diacyl-sn-glycero-3-phospho-(1D-myo-inositol) + ATP = a 1,2-diacyl-sn-glycero-3-phospho-(1D-myo-inositol-3-phosphate) + ADP + H(+). The catalysed reaction is L-seryl-[protein] + ATP = O-phospho-L-seryl-[protein] + ADP + H(+). It catalyses the reaction 1,2-dioctanoyl-sn-glycero-3-phospho-(1D-myo-inositol-4,5-bisphosphate) + ATP = 1,2-dioctanoyl-sn-glycero-3-phospho-(1D-myo-inositol-3,4,5-trisphosphate) + ADP + H(+). It carries out the reaction 1-octadecanoyl-2-(5Z,8Z,11Z,14Z)-eicosatetraenoyl-sn-glycero-3-phospho-1D-myo-inositol 4,5-bisphosphate + ATP = 1-octadecanoyl-2-(5Z,8Z,11Z,14Z-eicosatetraenoyl)-sn-glycero-3-phospho-(1D-myo-inositol 3,4,5-triphosphate) + ADP + H(+). Its pathway is phospholipid metabolism; phosphatidylinositol phosphate biosynthesis. In terms of biological role, phosphoinositide-3-kinase (PI3K) phosphorylates phosphatidylinositol (PI) and its phosphorylated derivatives at position 3 of the inositol ring to produce 3-phosphoinositides. Uses ATP and PtdIns(4,5)P2 (phosphatidylinositol 4,5-bisphosphate) to generate phosphatidylinositol 3,4,5-trisphosphate (PIP3). PIP3 plays a key role by recruiting PH domain-containing proteins to the membrane, including AKT1 and PDPK1, activating signaling cascades involved in cell growth, survival, proliferation, motility and morphology. Participates in cellular signaling in response to various growth factors. Involved in the activation of AKT1 upon stimulation by receptor tyrosine kinases ligands such as EGF, insulin, IGF1, VEGFA and PDGF. Involved in signaling via insulin-receptor substrate (IRS) proteins. Essential in endothelial cell migration during vascular development through VEGFA signaling, possibly by regulating RhoA activity. Required for lymphatic vasculature development, possibly by binding to RAS and by activation by EGF and FGF2, but not by PDGF. Regulates invadopodia formation through the PDPK1-AKT1 pathway. Participates in cardiomyogenesis in embryonic stem cells through a AKT1 pathway. Participates in vasculogenesis in embryonic stem cells through PDK1 and protein kinase C pathway. In addition to its lipid kinase activity, it displays a serine-protein kinase activity that results in the autophosphorylation of the p85alpha regulatory subunit as well as phosphorylation of other proteins such as 4EBP1, H-Ras, the IL-3 beta c receptor and possibly others. Plays a role in the positive regulation of phagocytosis and pinocytosis. The polypeptide is Phosphatidylinositol 4,5-bisphosphate 3-kinase catalytic subunit alpha isoform (PIK3CA) (Homo sapiens (Human)).